A 385-amino-acid polypeptide reads, in one-letter code: Protein delta homolog 1 (385 aa).

A signal peptide spans 1-23; that stretch reads MIATGALLRVLLLLLAFGHSTYG. EGF-like domains follow at residues 24-55, 53-86, 88-125, 127-168, 172-208, and 210-247; these read AECD…PLCD, LCDK…KFCE, DVRA…KDCQ, KAGP…NFCE, ATNS…KTCS, and PVSN…PTCA. The Extracellular segment spans residues 24–305; sequence AECDPPCDPQ…KSTPLLTEGQ (282 aa). Disulfide bonds link Cys26–Cys37, Cys30–Cys43, Cys45–Cys54, Cys57–Cys68, Cys63–Cys74, Cys76–Cys85, Cys92–Cys103, Cys97–Cys113, Cys115–Cys124, Cys131–Cys144, Cys138–Cys156, and Cys158–Cys167. An O-linked (GalNAc...) serine glycan is attached at Ser94. Asn100 carries N-linked (GlcNAc...) asparagine glycosylation. N-linked (GlcNAc...) asparagine; atypical; partial glycosylation occurs at Asn165. An N-linked (GlcNAc...) asparagine; atypical glycan is attached at Asn174. Intrachain disulfides connect Cys176–Cys187, Cys181–Cys196, Cys198–Cys207, Cys214–Cys225, Cys219–Cys235, and Cys237–Cys246. Ser216 is a glycosylation site (O-linked (GalNAc...) serine). Thr224 carries O-linked (GalNAc...) threonine glycosylation. A glycan (O-linked (GalNAc...) threonine) is linked at Thr258. Thr267 is a glycosylation site (O-linked (GalNAc...) threonine; partial). The O-linked (GalNAc...) threonine glycan is linked to Thr271. Asn295 is a glycosylation site (N-linked (GlcNAc...) asparagine). The chain crosses the membrane as a helical span at residues 306-329; it reads AICFTILGVLTSLVVLGTVAIVFL. Residues 330 to 385 lie on the Cytoplasmic side of the membrane; that stretch reads NKCETWVSNLRYNHTFRKKKNLLLQYNSGEELAVNIIFPEKIDMTTFNKEAGDEEI.

In terms of assembly, monomer. Interacts with SH3RF2. Post-translationally, N- and O-glycosylated. In terms of tissue distribution, highly expressed in fetal liver, placenta, adult adrenal gland, brain, testis and ovary and, to a lesser degree, in adult kidney, muscle, thymus and heart.

It localises to the membrane. Its subcellular location is the cytoplasm. In terms of biological role, may have a role in neuroendocrine differentiation. Inhibits adipocyte differentiation. The sequence is that of Protein delta homolog 1 (Dlk1) from Mus musculus (Mouse).